The primary structure comprises 268 residues: 4-hydroxy-tetrahydrodipicolinate reductase (268 aa).

An NAD(+)-binding site is contributed by 9–14 (GCSGRM). Arginine 36 contributes to the NADP(+) binding site. Residues 98–100 (GTT) and 122–125 (APNT) each bind NAD(+). The active-site Proton donor/acceptor is histidine 155. Histidine 156 is a (S)-2,3,4,5-tetrahydrodipicolinate binding site. Lysine 159 functions as the Proton donor in the catalytic mechanism. 165–166 (GT) contributes to the (S)-2,3,4,5-tetrahydrodipicolinate binding site.

It belongs to the DapB family.

It localises to the cytoplasm. It catalyses the reaction (S)-2,3,4,5-tetrahydrodipicolinate + NAD(+) + H2O = (2S,4S)-4-hydroxy-2,3,4,5-tetrahydrodipicolinate + NADH + H(+). The catalysed reaction is (S)-2,3,4,5-tetrahydrodipicolinate + NADP(+) + H2O = (2S,4S)-4-hydroxy-2,3,4,5-tetrahydrodipicolinate + NADPH + H(+). The protein operates within amino-acid biosynthesis; L-lysine biosynthesis via DAP pathway; (S)-tetrahydrodipicolinate from L-aspartate: step 4/4. In terms of biological role, catalyzes the conversion of 4-hydroxy-tetrahydrodipicolinate (HTPA) to tetrahydrodipicolinate. The polypeptide is 4-hydroxy-tetrahydrodipicolinate reductase (Colwellia psychrerythraea (strain 34H / ATCC BAA-681) (Vibrio psychroerythus)).